Consider the following 1002-residue polypeptide: Transposase for transposon gamma-delta (1002 aa).

The protein belongs to the transposase 7 family.

Required for transposition of transposon Tn1000. This is Transposase for transposon gamma-delta (tnpA) from Escherichia coli (strain K12).